We begin with the raw amino-acid sequence, 514 residues long: Peptide chain release factor 3 (514 aa).

One can recognise a tr-type G domain in the interval 8–268; the sequence is KKRRTFAIIS…TFLKFAPEPH (261 aa). GTP is bound by residues 17–24, 85–89, and 139–142; these read SHPDAGKT, DTPGH, and NKLD.

This sequence belongs to the TRAFAC class translation factor GTPase superfamily. Classic translation factor GTPase family. PrfC subfamily.

The protein resides in the cytoplasm. Its function is as follows. Increases the formation of ribosomal termination complexes and stimulates activities of RF-1 and RF-2. It binds guanine nucleotides and has strong preference for UGA stop codons. It may interact directly with the ribosome. The stimulation of RF-1 and RF-2 is significantly reduced by GTP and GDP, but not by GMP. This chain is Peptide chain release factor 3, found in Streptococcus pneumoniae (strain Hungary19A-6).